The following is an 89-amino-acid chain: Cell division topological specificity factor (89 aa).

This sequence belongs to the MinE family.

Its function is as follows. Prevents the cell division inhibition by proteins MinC and MinD at internal division sites while permitting inhibition at polar sites. This ensures cell division at the proper site by restricting the formation of a division septum at the midpoint of the long axis of the cell. The protein is Cell division topological specificity factor of Pectobacterium atrosepticum (strain SCRI 1043 / ATCC BAA-672) (Erwinia carotovora subsp. atroseptica).